We begin with the raw amino-acid sequence, 221 residues long: Probable septum site-determining protein MinC (221 aa).

Belongs to the MinC family. As to quaternary structure, interacts with MinD and FtsZ.

Its function is as follows. Cell division inhibitor that blocks the formation of polar Z ring septums. Rapidly oscillates between the poles of the cell to destabilize FtsZ filaments that have formed before they mature into polar Z rings. Prevents FtsZ polymerization. The protein is Probable septum site-determining protein MinC of Shewanella oneidensis (strain ATCC 700550 / JCM 31522 / CIP 106686 / LMG 19005 / NCIMB 14063 / MR-1).